A 253-amino-acid polypeptide reads, in one-letter code: Phycocyanobilin:ferredoxin oxidoreductase (253 aa).

Belongs to the HY2 family.

The catalysed reaction is (2R,3Z)-phycocyanobilin + 4 oxidized [2Fe-2S]-[ferredoxin] = biliverdin IXalpha + 4 reduced [2Fe-2S]-[ferredoxin] + 4 H(+). Functionally, catalyzes the four-electron reduction of biliverdin IX-alpha (2-electron reduction at both the A and D rings); the reaction proceeds via an isolatable 2-electron intermediate, 181,182-dihydrobiliverdin. This chain is Phycocyanobilin:ferredoxin oxidoreductase (pcyA), found in Gloeobacter violaceus (strain ATCC 29082 / PCC 7421).